Here is a 351-residue protein sequence, read N- to C-terminus: Prostaglandin reductase 2 (351 aa).

99–100 (FY) contributes to the substrate binding site. NADP(+)-binding positions include 165-168 (GACG), K192, Y208, N231, 253-259 (CGQISQY), 287-289 (FMV), and N337. 288-290 (MVL) is a binding site for substrate.

The protein belongs to the NADP-dependent oxidoreductase L4BD family. As to quaternary structure, monomer.

It localises to the cytoplasm. The enzyme catalyses 13,14-dihydro-15-oxo-prostaglandin E2 + NAD(+) = 15-oxoprostaglandin E2 + NADH + H(+). It carries out the reaction 13,14-dihydro-15-oxo-prostaglandin E2 + NADP(+) = 15-oxoprostaglandin E2 + NADPH + H(+). The catalysed reaction is 13,14-dihydro-15-oxo-PGF2alpha + NADP(+) = 15-oxoprostaglandin F2alpha + NADPH + H(+). It catalyses the reaction 13,14-dihydro-15-oxo-prostaglandin E1 + NADP(+) = 15-oxoprostaglandin E1 + NADPH + H(+). The enzyme catalyses 13,14-dihydro-15-oxo-prostaglandin F1alpha + NADP(+) = 15-oxoprostaglandin F1alpha + NADPH + H(+). In terms of biological role, functions as 15-oxo-prostaglandin 13-reductase and acts on 15-keto-PGE1, 15-keto-PGE2, 15-keto-PGE1-alpha and 15-keto-PGE2-alpha with highest activity towards 15-keto-PGE2. Overexpression represses transcriptional activity of PPARG and inhibits adipocyte differentiation. The sequence is that of Prostaglandin reductase 2 from Rattus norvegicus (Rat).